Consider the following 780-residue polypeptide: Kazrin (780 aa).

Residues 79–261 (AQVLLREEVV…LATLTKDVPK (183 aa)) adopt a coiled-coil conformation. The segment at 295 to 430 (QQTLYHSHPP…TRHSLSLSEG (136 aa)) is disordered. A phosphoserine mark is found at Ser357, Ser372, and Ser392. Over residues 416-427 (SQCSPTRHSLSL) the composition is skewed to polar residues. 3 SAM domains span residues 451-516 (WKAG…YRDA), 529-593 (DHHW…LYQV), and 617-684 (WTNQ…STVF). A disordered region spans residues 692-780 (IRESERFGTP…EYSSLEVTNV (89 aa)). Residues 760–771 (LQGRPEQCRLEE) show a composition bias toward basic and acidic residues.

Belongs to the kazrin family.

The protein resides in the cell junction. The protein localises to the nucleus. It localises to the cytoplasm. It is found in the cytoskeleton. Its function is as follows. Component of the cornified envelope of keratinocytes. May be involved in the interplay between adherens junctions and desmosomes. The function in the nucleus is not known. The protein is Kazrin (Kazn) of Rattus norvegicus (Rat).